The primary structure comprises 173 residues: Ribosome maturation factor RimM (173 aa).

Residues 94–166 enclose the PRC barrel domain; it reads VQEEPYIDII…KIIVELPMGF (73 aa).

This sequence belongs to the RimM family. Binds ribosomal protein uS19.

It is found in the cytoplasm. An accessory protein needed during the final step in the assembly of 30S ribosomal subunit, possibly for assembly of the head region. Essential for efficient processing of 16S rRNA. May be needed both before and after RbfA during the maturation of 16S rRNA. It has affinity for free ribosomal 30S subunits but not for 70S ribosomes. The chain is Ribosome maturation factor RimM from Amoebophilus asiaticus (strain 5a2).